We begin with the raw amino-acid sequence, 665 residues long: Protein Fe65 homolog (665 aa).

The segment covering 1–12 (MREGTPRVRIEV) has biased composition (basic and acidic residues). Disordered regions lie at residues 1-43 (MREG…DTAT) and 90-111 (SRGY…RRRN). Polar residues predominate over residues 14-24 (KGSNRPSQFVS). 2 stretches are compositionally biased toward basic and acidic residues: residues 27-40 (EEQR…RDSD) and 102-111 (GRREEERRRN). The WW domain maps to 233–266 (KDLPPGWEKHEDPQGYSYYWHVDSGTIQRQPPPP). PID domains lie at 330–456 (VRFA…RDIC) and 499–615 (FLGV…VLDA).

As to quaternary structure, interacts (via PID 2 domain) with apl-1 (via cytoplasmic domain). In terms of processing, phosphorylated. As to expression, expressed in the pharynx (including pharyngeal muscle and nerve cells), ventral nerve cord and tail neurons.

The protein localises to the cytoplasm. It localises to the cytoskeleton. Functionally, modulates pharyngeal pumping activity, at least in part by regulating expression of the acetylcholinesterase genes ace-1 and ace-2. This is Protein Fe65 homolog from Caenorhabditis elegans.